Reading from the N-terminus, the 488-residue chain is 3-octaprenyl-4-hydroxybenzoate carboxy-lyase (488 aa).

Residue Asn172 coordinates Mn(2+). Residues 175 to 177 (IYR), 189 to 191 (RWL), and 194 to 195 (RG) contribute to the prenylated FMN site. Position 238 (Glu238) interacts with Mn(2+). The Proton donor role is filled by Asp287.

Belongs to the UbiD family. As to quaternary structure, homohexamer. Prenylated FMN serves as cofactor. It depends on Mn(2+) as a cofactor.

Its subcellular location is the cell membrane. The catalysed reaction is a 4-hydroxy-3-(all-trans-polyprenyl)benzoate + H(+) = a 2-(all-trans-polyprenyl)phenol + CO2. It participates in cofactor biosynthesis; ubiquinone biosynthesis. Catalyzes the decarboxylation of 3-octaprenyl-4-hydroxy benzoate to 2-octaprenylphenol, an intermediate step in ubiquinone biosynthesis. In Legionella pneumophila (strain Corby), this protein is 3-octaprenyl-4-hydroxybenzoate carboxy-lyase.